Here is a 258-residue protein sequence, read N- to C-terminus: Tryptophan synthase alpha chain (258 aa).

Residues Glu52 and Asp63 each act as proton acceptor in the active site.

The protein belongs to the TrpA family. In terms of assembly, tetramer of two alpha and two beta chains.

It catalyses the reaction (1S,2R)-1-C-(indol-3-yl)glycerol 3-phosphate + L-serine = D-glyceraldehyde 3-phosphate + L-tryptophan + H2O. It participates in amino-acid biosynthesis; L-tryptophan biosynthesis; L-tryptophan from chorismate: step 5/5. Its function is as follows. The alpha subunit is responsible for the aldol cleavage of indoleglycerol phosphate to indole and glyceraldehyde 3-phosphate. The sequence is that of Tryptophan synthase alpha chain from Streptococcus pneumoniae (strain JJA).